The following is a 275-amino-acid chain: Formamidopyrimidine-DNA glycosylase (275 aa).

The active-site Schiff-base intermediate with DNA is the P2. E3 serves as the catalytic Proton donor. K59 serves as the catalytic Proton donor; for beta-elimination activity. DNA contacts are provided by H94 and R113. The FPG-type zinc finger occupies 241–275; the sequence is LVHTHAKEPCQICGTIIQKTKVNGRGTYYCPNCQN. R265 serves as the catalytic Proton donor; for delta-elimination activity.

It belongs to the FPG family. Monomer. Zn(2+) is required as a cofactor.

It carries out the reaction Hydrolysis of DNA containing ring-opened 7-methylguanine residues, releasing 2,6-diamino-4-hydroxy-5-(N-methyl)formamidopyrimidine.. It catalyses the reaction 2'-deoxyribonucleotide-(2'-deoxyribose 5'-phosphate)-2'-deoxyribonucleotide-DNA = a 3'-end 2'-deoxyribonucleotide-(2,3-dehydro-2,3-deoxyribose 5'-phosphate)-DNA + a 5'-end 5'-phospho-2'-deoxyribonucleoside-DNA + H(+). Functionally, involved in base excision repair of DNA damaged by oxidation or by mutagenic agents. Acts as a DNA glycosylase that recognizes and removes damaged bases. Has a preference for oxidized purines, such as 7,8-dihydro-8-oxoguanine (8-oxoG). Has AP (apurinic/apyrimidinic) lyase activity and introduces nicks in the DNA strand. Cleaves the DNA backbone by beta-delta elimination to generate a single-strand break at the site of the removed base with both 3'- and 5'-phosphates. The sequence is that of Formamidopyrimidine-DNA glycosylase from Ureaplasma parvum serovar 3 (strain ATCC 700970).